A 357-amino-acid polypeptide reads, in one-letter code: Putative F-box/kelch-repeat protein At5g38680 (357 aa).

The F-box domain occupies 14 to 61 (NSNPSLPDALIISCIARVSRLYYPILSFVSKSFRSLLASPELYKERSL). Kelch repeat units follow at residues 131-175 (NIYN…VLDG), 177-224 (IYVA…SKSL), 226-267 (IDEK…YCEI), and 268-313 (ENVL…GGKK).

The protein is Putative F-box/kelch-repeat protein At5g38680 of Arabidopsis thaliana (Mouse-ear cress).